A 355-amino-acid polypeptide reads, in one-letter code: MNKKIEKNNNVINKPNKYESNTTDNQLIMKKNANSGSKKSRSTKVEVETNLPKRRGRRPKKILDSFESTTNVLNTSTEQNNSAVILRLPKIDPSKLSGLKNKQGRKVFEVPETTEPGDNYSDNELSEGMFRNDIPKDDVCHKCIKYEKEITHLKNEVMKLKNCDKTDKTSKIHNTSVTFISLGSGKKMSLKKTNLRCLWDCHKFDNIPCYLPELYNNGKYYVIASVFCSFNCALAHNLYYIKDSKIDIRKSLVFRLYRELYGLTPDEPIELKEAPPKELLEDFGGKVNIIDYRRSFIKLNKEFIVYMPPLKPIGVQIVEHDTDTDGNDTDRDYVLKRNKPLMKGRGIVSMMGFNK.

Positions 1–61 are disordered; the sequence is MNKKIEKNNN…PKRRGRRPKK (61 aa). Residues 18 to 37 show a composition bias toward polar residues; sequence YESNTTDNQLIMKKNANSGS.

This is an uncharacterized protein from Acanthamoeba polyphaga mimivirus (APMV).